Consider the following 422-residue polypeptide: E3 ubiquitin-protein ligase CBLL2 (422 aa).

The RING-type zinc finger occupies 54 to 94 (CDKCDLPIKIYGRIIPCKHAFCYNCANLYDKIGYKICPRCS). The HYB domain stretch occupies residues 93-151 (CSYPVLRIEEHKRGSVFMCSVVQGCKRTYLSQKSLQAHIKRRHKRARKQVASASLEKLR). The segment at 109 to 135 (FMCSVVQGCKRTYLSQKSLQAHIKRRH) adopts a C2H2-type zinc-finger fold. Disordered stretches follow at residues 190-213 (MQQM…PELS) and 378-422 (QTDA…HRPY). Residues 195–205 (HEQHNQPHKDL) are compositionally biased toward basic and acidic residues. The span at 393-405 (LPPPPPTWSPPPS) shows a compositional bias: pro residues. The segment covering 410–422 (GSHHSYQRRHRPY) has biased composition (basic residues).

Homodimer.

It localises to the cytoplasm. The enzyme catalyses S-ubiquitinyl-[E2 ubiquitin-conjugating enzyme]-L-cysteine + [acceptor protein]-L-lysine = [E2 ubiquitin-conjugating enzyme]-L-cysteine + N(6)-ubiquitinyl-[acceptor protein]-L-lysine.. It participates in protein modification; protein ubiquitination. E3 ubiquitin ligase catalyzing the covalent attachment of ubiquitin moieties onto substrate proteins. May operate on tyrosine-phosphorylated SRC substrates. This Macaca fascicularis (Crab-eating macaque) protein is E3 ubiquitin-protein ligase CBLL2 (CBLL2).